An 88-amino-acid polypeptide reads, in one-letter code: Exodeoxyribonuclease 7 small subunit (88 aa).

This sequence belongs to the XseB family. As to quaternary structure, heterooligomer composed of large and small subunits.

The protein localises to the cytoplasm. The catalysed reaction is Exonucleolytic cleavage in either 5'- to 3'- or 3'- to 5'-direction to yield nucleoside 5'-phosphates.. Functionally, bidirectionally degrades single-stranded DNA into large acid-insoluble oligonucleotides, which are then degraded further into small acid-soluble oligonucleotides. In Tolumonas auensis (strain DSM 9187 / NBRC 110442 / TA 4), this protein is Exodeoxyribonuclease 7 small subunit.